We begin with the raw amino-acid sequence, 102 residues long: Small ribosomal subunit protein bS18 (102 aa).

This sequence belongs to the bacterial ribosomal protein bS18 family. Part of the 30S ribosomal subunit. Forms a tight heterodimer with protein bS6.

In terms of biological role, binds as a heterodimer with protein bS6 to the central domain of the 16S rRNA, where it helps stabilize the platform of the 30S subunit. This Orientia tsutsugamushi (strain Ikeda) (Rickettsia tsutsugamushi) protein is Small ribosomal subunit protein bS18.